We begin with the raw amino-acid sequence, 369 residues long: MTAMTVPPSLLPLEPFPTAPDTRASTPHIRLHGLGKRYPGGVQALREIDLEIRRGEVFGIIGRSGAGKSSLIRTLNRLERPSEGQVLIDDEDIGGYDGQRLVALRRRIGMIFQHFNLMSAKTVRQNIALPLRVAGVPRARIEERVAGLLQLVGLEEKRDAYPAQLSGGQKQRVGIARALVHQPQILLCDEATSALDPESTQAILALLRDINRRLGLTIVLITHEMAVIREICDRVVVLECGRIVEQGEVWEVFGDPRHAVTRSLLGSLRAALPADLQARLRQAPGAGDPVLLDLQYTGASRRVPDLLAIARAIGQRVDLLHGGIERIQGRALGRLLLQVGAPPGELPGVLAKAALVADKVEVLGHVAHA.

An ABC transporter domain is found at 29 to 265; the sequence is IRLHGLGKRY…PRHAVTRSLL (237 aa). 62 to 69 is a binding site for ATP; sequence GRSGAGKS.

The protein belongs to the ABC transporter superfamily. Methionine importer (TC 3.A.1.24) family. In terms of assembly, the complex is composed of two ATP-binding proteins (MetN), two transmembrane proteins (MetI) and a solute-binding protein (MetQ).

The protein resides in the cell inner membrane. The enzyme catalyses L-methionine(out) + ATP + H2O = L-methionine(in) + ADP + phosphate + H(+). It carries out the reaction D-methionine(out) + ATP + H2O = D-methionine(in) + ADP + phosphate + H(+). Its function is as follows. Part of the ABC transporter complex MetNIQ involved in methionine import. Responsible for energy coupling to the transport system. This Pseudomonas aeruginosa (strain ATCC 15692 / DSM 22644 / CIP 104116 / JCM 14847 / LMG 12228 / 1C / PRS 101 / PAO1) protein is Methionine import ATP-binding protein MetN 1.